Consider the following 494-residue polypeptide: DDB1- and CUL4-associated factor 4 (494 aa).

A disordered region spans residues 1 to 65 (MHQSSWKSRR…AGSSSVPDLP (65 aa)). Basic residues predominate over residues 7-20 (KSRRHRRRGHRHSA). Residues 51–60 (STSSTAGSSS) show a composition bias toward low complexity. 2 WD repeats span residues 367 to 406 (FHDS…CIRQ) and 409 to 450 (GHVN…LLRT).

Interacts with DDB1 and CUL4A.

Its pathway is protein modification; protein ubiquitination. Functionally, may function as a substrate receptor for CUL4-DDB1 E3 ubiquitin-protein ligase complex. The chain is DDB1- and CUL4-associated factor 4 (DCAF4) from Bos taurus (Bovine).